The following is a 1493-amino-acid chain: Myosin-13 (1493 aa).

The 50-residue stretch at 18-67 (KVGSIVWVQDPEEAWIDGEVVEVNGEDIKVQCTSGKTVVAKGSNTYPKDM) folds into the Myosin N-terminal SH3-like domain. Positions 72–741 (SGVDDMTTLA…QMAELDDRRT (670 aa)) constitute a Myosin motor domain. ATP is bound by residues 166 to 173 (GESGAGKT) and 219 to 227 (NNNSSRFGK). Actin-binding regions lie at residues 504–538 (LIEK…YETL), 540–563 (DNKY…AGDV), 598–622 (FPPL…KQQL), and 622–644 (LASL…KPNN). IQ domains are found at residues 744–773 (LGRA…AAIN), 767–796 (LRNA…EAAA), 792–821 (REAA…VTVQ), 813–842 (YIEA…ATTV), 836–865 (KTKA…AAIT), and 859–888 (LKKA…DARD). Positions 889 to 1057 (TVVLQAAKSM…NFLKESVLTT (169 aa)) form a coiled coil. The disordered stretch occupies residues 1085 to 1114 (QLSGAEFTTPPRIQESGSDTKSRGSHIDPQ). Residues 1102 to 1114 (SDTKSRGSHIDPQ) are compositionally biased toward basic and acidic residues. Residues 1161 to 1444 (DRLVQMIGSA…IASMTGVMTD (284 aa)) form the Dilute domain.

It belongs to the TRAFAC class myosin-kinesin ATPase superfamily. Myosin family. Plant myosin class XI subfamily. As to quaternary structure, homodimer.

Its function is as follows. Myosin heavy chain that is required for the cell cycle-regulated transport of various organelles and proteins for their segregation. Functions by binding with its tail domain to receptor proteins on organelles and exerting force with its N-terminal motor domain against actin filaments, thereby transporting its cargo along polarized actin cables. This chain is Myosin-13 (XI-G), found in Arabidopsis thaliana (Mouse-ear cress).